Here is a 325-residue protein sequence, read N- to C-terminus: Plasminogen (325 aa).

Kringle domains are found at residues Ala80–Cys146 and Leu159–Val217. Cystine bridges form between Cys81–Cys146, Cys102–Cys135, Cys124–Cys141, and Cys188–Cys212.

Belongs to the peptidase S1 family. Plasminogen subfamily.

The protein localises to the secreted. It catalyses the reaction Preferential cleavage: Lys-|-Xaa &gt; Arg-|-Xaa, higher selectivity than trypsin. Converts fibrin into soluble products.. Plasmin dissolves the fibrin of blood clots and acts as a proteolytic factor in a variety of other processes including embryonic development, tissue remodeling, tumor invasion, and inflammation. This chain is Plasminogen, found in Petromyzon marinus (Sea lamprey).